The chain runs to 1151 residues: Syntaxin-binding protein 5 (1151 aa).

The segment at 14 to 34 is disordered; that stretch reads TAGSSSASQQQQQQHPPGNRE. A compositionally biased stretch (low complexity) spans 17-27; sequence SSSASQQQQQQ. WD repeat units lie at residues 61–94, 101–140, 145–181, 200–234, 240–272, 294–336, 344–378, 400–477, 505–619, and 633–695; these read SALA…CYCQ, VIQL…SLKF, VTFC…GYVI, HISD…DYRY, IHSV…PAKP, PILK…KSTA, IVDF…LIDL, TCCE…YKLK, QIIS…ELVI, and TSLA…SGAG. Disordered regions lie at residues 555–595 and 674–729; these read ETPE…GLRD and SNDP…EQKM. Ser692 is modified (phosphoserine). Residues 712–721 show a composition bias toward low complexity; it reads SPTSGSSSPH. Ser723 carries the phosphoserine; by PKA modification. Residue Ser759 is modified to Phosphoserine. Thr762 is modified (phosphothreonine). Ser782 is modified (phosphoserine). Thr784 bears the Phosphothreonine mark. Ser785 is modified (phosphoserine). WD repeat units lie at residues 794 to 851, 860 to 934, 939 to 983, and 997 to 1020; these read ISAL…SGTI, RMAF…QNCA, ITET…LDVY, and CFTN…TYSQ. A compositionally biased stretch (basic and acidic residues) spans 881–892; it reads HNVPEEKDEKEK. The segment at 881–906 is disordered; the sequence is HNVPEEKDEKEKLKKRRPVSVSPSSS. Phosphoserine occurs at positions 900 and 902. Thr1039 is modified (phosphothreonine). Phosphoserine occurs at positions 1058 and 1131. A v-SNARE coiled-coil homology domain is found at 1086 to 1146; it reads GIEGVKGAAS…HEIMLKYKDK (61 aa).

Belongs to the WD repeat L(2)GL family. In terms of assembly, interacts with STX1A and STX1B via its v-SNARE homology domain. Part of a complex that contains STX1, STXBP5, SNAP25 and SYT1. Part of a complex that contains STXBP5, STX4A and SNAP23.

It is found in the cytoplasm. The protein resides in the cell membrane. Its subcellular location is the cytoplasmic vesicle membrane. It localises to the cytoplasmic vesicle. The protein localises to the secretory vesicle. It is found in the synaptic vesicle. The protein resides in the synapse. Plays a regulatory role in calcium-dependent exocytosis and neurotransmitter release. Inhibits membrane fusion between transport vesicles and the plasma membrane. May modulate the assembly of trans-SNARE complexes between transport vesicles and the plasma membrane. Inhibits translocation of GLUT4 from intracellular vesicles to the plasma membrane. Competes with STXBP1 for STX1 binding. This Homo sapiens (Human) protein is Syntaxin-binding protein 5 (STXBP5).